The sequence spans 113 residues: Chaperone protein SigE (113 aa).

This sequence belongs to the IpgE/SigE chaperone family. In terms of assembly, homodimer or higher-order oligomers.

Its subcellular location is the cytoplasm. In terms of biological role, molecular chaperone required for SopB/SigD stabilization and secretion. This Salmonella paratyphi A (strain ATCC 9150 / SARB42) protein is Chaperone protein SigE (sigE).